The primary structure comprises 533 residues: MEIKNIKEFEKASKKLQKDTLKIALALLFLIGAALLALIFGQANSKGLLLIFAAVIGGYMAMNIGANDVSNNVGPAVGSKAISMGGAILIAAICEMLGAIIAGGEVVSTIKGRIVSPEFINDAHIFINVMLASLLSGALWLHVATLIGAPVSTSHSVVGGIMGAGMAAAGMVAVNWHFLSGIVASWVISPLMGALIAMFFLMLIKKTIAYKEDKKSAALKVVPYLVALMSLTFSWYLIVKVLKRLYALNFEIQLACGCILALLIFILFKRFVLKKAPQLENSHESINELFNVPLIFAAALLSFAHGANDVANAIGPLAAISQTLEDANSPIGNTLSSVPLWIMVVGAAGIALGLSLYGPKLIKTVGSEITELDKMQAFCIALSAVITVLLASQLGLPVSSTHIVVGAVFGVGFLRERLREQSRRRFARIRDNIVAAHFGEDLEEIEGFLERFDKANLKEKSLMLESLKKSKNTAIALELKKKEKKSLKKVYKEEVIKRSILKKIVTAWLVTVPVSALLGALLFVALGFIEKYF.

A run of 12 helical transmembrane segments spans residues 23 to 43 (IALA…FGQA), 47 to 67 (GLLL…IGAN), 81 to 101 (AISM…GAII), 129 to 149 (VMLA…LIGA), 156 to 176 (SVVG…AVNW), 182 to 202 (IVAS…FFLM), 221 to 241 (VVPY…IVKV), 248 to 268 (LNFE…FILF), 286 to 306 (INEL…FAHG), 338 to 358 (VPLW…SLYG), 372 to 392 (LDKM…LLAS), and 509 to 529 (LVTV…LGFI).

It belongs to the inorganic phosphate transporter (PiT) (TC 2.A.20) family.

Its subcellular location is the cell membrane. Functionally, potential transporter for phosphate. This chain is Putative phosphate permease HP_1491, found in Helicobacter pylori (strain ATCC 700392 / 26695) (Campylobacter pylori).